The primary structure comprises 166 residues: Transcription antitermination protein NusB (166 aa).

Residues 1-18 (MISDESDRFNPRDPKPAD) are compositionally biased toward basic and acidic residues. A disordered region spans residues 1 to 30 (MISDESDRFNPRDPKPADAGKPSKSAKRRE).

This sequence belongs to the NusB family.

In terms of biological role, involved in transcription antitermination. Required for transcription of ribosomal RNA (rRNA) genes. Binds specifically to the boxA antiterminator sequence of the ribosomal RNA (rrn) operons. This is Transcription antitermination protein NusB from Pseudomonas fluorescens (strain Pf0-1).